Here is a 264-residue protein sequence, read N- to C-terminus: ATP synthase subunit a (264 aa).

6 helical membrane passes run 29 to 49 (TWHI…LWIF), 87 to 107 (NALI…MNFM), 134 to 154 (DLNI…YYSI), 177 to 197 (IPVN…SLAL), 208 to 228 (LIFI…SLGV), and 235 to 255 (LIFH…LTIV).

It belongs to the ATPase A chain family. In terms of assembly, F-type ATPases have 2 components, CF(1) - the catalytic core - and CF(0) - the membrane proton channel. CF(1) has five subunits: alpha(3), beta(3), gamma(1), delta(1), epsilon(1). CF(0) has three main subunits: a(1), b(2) and c(9-12). The alpha and beta chains form an alternating ring which encloses part of the gamma chain. CF(1) is attached to CF(0) by a central stalk formed by the gamma and epsilon chains, while a peripheral stalk is formed by the delta and b chains.

It is found in the cell inner membrane. Key component of the proton channel; it plays a direct role in the translocation of protons across the membrane. This chain is ATP synthase subunit a, found in Shewanella amazonensis (strain ATCC BAA-1098 / SB2B).